Here is a 351-residue protein sequence, read N- to C-terminus: Histidinol-phosphate aminotransferase (351 aa).

At lysine 221 the chain carries N6-(pyridoxal phosphate)lysine.

It belongs to the class-II pyridoxal-phosphate-dependent aminotransferase family. Histidinol-phosphate aminotransferase subfamily. In terms of assembly, homodimer. The cofactor is pyridoxal 5'-phosphate.

The enzyme catalyses L-histidinol phosphate + 2-oxoglutarate = 3-(imidazol-4-yl)-2-oxopropyl phosphate + L-glutamate. It participates in amino-acid biosynthesis; L-histidine biosynthesis; L-histidine from 5-phospho-alpha-D-ribose 1-diphosphate: step 7/9. The polypeptide is Histidinol-phosphate aminotransferase (Staphylococcus epidermidis (strain ATCC 35984 / DSM 28319 / BCRC 17069 / CCUG 31568 / BM 3577 / RP62A)).